Here is a 226-residue protein sequence, read N- to C-terminus: Translation initiation factor 6 (226 aa).

It belongs to the eIF-6 family.

Functionally, binds to the 50S ribosomal subunit and prevents its association with the 30S ribosomal subunit to form the 70S initiation complex. The polypeptide is Translation initiation factor 6 (Haloquadratum walsbyi (strain DSM 16790 / HBSQ001)).